The following is a 1179-amino-acid chain: Putative ankyrin repeat protein RF_0381 (1179 aa).

ANK repeat units follow at residues 282 to 311, 604 to 633, 637 to 666, 670 to 699, 703 to 732, 736 to 765, 769 to 798, 802 to 831, 833 to 860, 864 to 893, 897 to 926, 930 to 959, 963 to 992, 996 to 1025, 1029 to 1058, 1062 to 1091, 1095 to 1124, and 1128 to 1157; these read NGYQ…MHRQ, NKDQ…NPNA, HGVI…DVNA, NGET…NIHA, NGET…DVNA, NGLT…DVNA, SGET…DVNA, NGET…NVNN, KTIL…DIHA, SGET…DIHA, SGET…DINT, DGLT…DVNA, and SGET…DINL.

In Rickettsia felis (strain ATCC VR-1525 / URRWXCal2) (Rickettsia azadi), this protein is Putative ankyrin repeat protein RF_0381.